The sequence spans 254 residues: 3-dehydroquinate dehydratase (254 aa).

3-dehydroquinate-binding positions include 47 to 49 and arginine 83; that span reads EWR. Histidine 144 functions as the Proton donor/acceptor in the catalytic mechanism. The active-site Schiff-base intermediate with substrate is the lysine 171. Arginine 214, serine 233, and glutamine 237 together coordinate 3-dehydroquinate.

This sequence belongs to the type-I 3-dehydroquinase family. In terms of assembly, homodimer.

It carries out the reaction 3-dehydroquinate = 3-dehydroshikimate + H2O. Its pathway is metabolic intermediate biosynthesis; chorismate biosynthesis; chorismate from D-erythrose 4-phosphate and phosphoenolpyruvate: step 3/7. Functionally, involved in the third step of the chorismate pathway, which leads to the biosynthesis of aromatic amino acids. Catalyzes the cis-dehydration of 3-dehydroquinate (DHQ) and introduces the first double bond of the aromatic ring to yield 3-dehydroshikimate. The sequence is that of 3-dehydroquinate dehydratase from Clostridium botulinum (strain Eklund 17B / Type B).